Consider the following 898-residue polypeptide: Endoplasmic reticulum metallopeptidase 1 (898 aa).

Methionine 1 carries the post-translational modification N-acetylmethionine. A disordered region spans residues 1-59; sequence MEWSSESAAVRRHRGTAERREGQAAASHPQREASAQEDARGGGRMRGRTESGGESRGAK. Residues 1–66 lie on the Cytoplasmic side of the membrane; it reads MEWSSESAAV…GAKTALSEAR (66 aa). Residues 37–57 are compositionally biased toward basic and acidic residues; that stretch reads EDARGGGRMRGRTESGGESRG. Residues 67–87 form a helical membrane-spanning segment; that stretch reads TALALALYLLALRALVQLSLQ. Residues 88-393 are Lumenal-facing; the sequence is RLVLSRTSGL…SSSEYRHGSM (306 aa). The N-linked (GlcNAc...) asparagine glycan is linked to asparagine 176. Cysteine 198 and cysteine 216 are oxidised to a cystine. 2 residues coordinate Zn(2+): histidine 199 and aspartate 211. The Proton acceptor role is filled by glutamate 245. Residues glutamate 246, glutamate 272, and histidine 348 each coordinate Zn(2+). A helical membrane pass occupies residues 394–414; the sequence is VFFDVLGLLVIAYPSRVGSII. Topologically, residues 415–451 are cytoplasmic; the sequence is NYMVVMAVVLYLGRKLLRPNHSNSNYVRDFLCGLGIT. Residues 452–472 form a helical membrane-spanning segment; it reads FISWFTSLVTVLIIAVFVSLI. Over 473–480 the chain is Lumenal; the sequence is GQSLSWYN. A helical membrane pass occupies residues 481–501; the sequence is YFYIAVCLYGTATVAKIILIH. Topologically, residues 502–515 are cytoplasmic; sequence TLAKRFYYVNASDL. Residues 516–538 form a helical membrane-spanning segment; the sequence is YLGELFFDTSLFVHCGFLVALTA. Topologically, residues 539–542 are lumenal; it reads QGFC. Residues 543–562 form a helical membrane-spanning segment; the sequence is SAFMSAVWVAFPLLTKLCVY. Over 563–573 the chain is Cytoplasmic; that stretch reads KDFKKHGAKGR. A helical membrane pass occupies residues 574-594; that stretch reads FIALYLLGMFIPYLYGLYLIW. Residues 595–615 are Lumenal-facing; sequence AVFEMFTPILGRSGSEIPPDV. Residues 616–636 form a helical membrane-spanning segment; it reads VLASILAVCVMILSSYFITFI. The Cytoplasmic portion of the chain corresponds to 637–645; that stretch reads YLVNSTKKT. The chain crosses the membrane as a helical span at residues 646–666; that stretch reads ILTLILVCAVTFLLVCSGAFF. Residues 667–898 lie on the Lumenal side of the membrane; sequence PYSSNPDSPK…WVSTYSLFVF (232 aa). Asparagine 724 carries N-linked (GlcNAc...) asparagine glycosylation.

Belongs to the peptidase M28 family. Zn(2+) serves as cofactor. As to expression, widely expressed, with highest levels in ovary, kidney, hypothalamus and hippocampus. Within the ovarian follicle, expressed in granulosa cells, but not in oocytes. Present in both preantral and antral follicles, but not in atretic antral follicle.

The protein localises to the endoplasmic reticulum membrane. Within the ovary, required for the organization of somatic cells and oocytes into discrete follicular structures. This is Endoplasmic reticulum metallopeptidase 1 from Rattus norvegicus (Rat).